The primary structure comprises 401 residues: tRNA pseudouridine synthase Pus10 (401 aa).

Positions Ala-64–Pro-195 constitute a THUMP domain.

Belongs to the pseudouridine synthase Pus10 family.

It catalyses the reaction uridine(54) in tRNA = pseudouridine(54) in tRNA. It carries out the reaction uridine(55) in tRNA = pseudouridine(55) in tRNA. In terms of biological role, responsible for synthesis of pseudouridine from uracil-54 and uracil-55 in the psi GC loop of transfer RNAs. In Caldivirga maquilingensis (strain ATCC 700844 / DSM 13496 / JCM 10307 / IC-167), this protein is tRNA pseudouridine synthase Pus10.